Reading from the N-terminus, the 449-residue chain is Probable glycine dehydrogenase (decarboxylating) subunit 1 (449 aa).

Belongs to the GcvP family. N-terminal subunit subfamily. As to quaternary structure, the glycine cleavage system is composed of four proteins: P, T, L and H. In this organism, the P 'protein' is a heterodimer of two subunits.

It catalyses the reaction N(6)-[(R)-lipoyl]-L-lysyl-[glycine-cleavage complex H protein] + glycine + H(+) = N(6)-[(R)-S(8)-aminomethyldihydrolipoyl]-L-lysyl-[glycine-cleavage complex H protein] + CO2. The glycine cleavage system catalyzes the degradation of glycine. The P protein binds the alpha-amino group of glycine through its pyridoxal phosphate cofactor; CO(2) is released and the remaining methylamine moiety is then transferred to the lipoamide cofactor of the H protein. This is Probable glycine dehydrogenase (decarboxylating) subunit 1 from Pyrococcus horikoshii (strain ATCC 700860 / DSM 12428 / JCM 9974 / NBRC 100139 / OT-3).